We begin with the raw amino-acid sequence, 279 residues long: Shikimate dehydrogenase (NADP(+)) (279 aa).

Shikimate-binding positions include 19–21 (SRS) and threonine 66. Residue lysine 70 is the Proton acceptor of the active site. Positions 91 and 106 each coordinate shikimate. NADP(+)-binding positions include 129–133 (GAGGA), 152–157 (NRTLER), and isoleucine 218. A shikimate-binding site is contributed by tyrosine 220. NADP(+) is bound at residue glycine 241.

The protein belongs to the shikimate dehydrogenase family. Homodimer.

It catalyses the reaction shikimate + NADP(+) = 3-dehydroshikimate + NADPH + H(+). The protein operates within metabolic intermediate biosynthesis; chorismate biosynthesis; chorismate from D-erythrose 4-phosphate and phosphoenolpyruvate: step 4/7. Functionally, involved in the biosynthesis of the chorismate, which leads to the biosynthesis of aromatic amino acids. Catalyzes the reversible NADPH linked reduction of 3-dehydroshikimate (DHSA) to yield shikimate (SA). In Gluconobacter oxydans (strain 621H) (Gluconobacter suboxydans), this protein is Shikimate dehydrogenase (NADP(+)).